Here is a 242-residue protein sequence, read N- to C-terminus: Biosynthetic peptidoglycan transglycosylase (242 aa).

Residues 19-39 (ILAALAVFWGGGIALFSVVPV) traverse the membrane as a helical segment.

It belongs to the glycosyltransferase 51 family.

Its subcellular location is the cell inner membrane. The enzyme catalyses [GlcNAc-(1-&gt;4)-Mur2Ac(oyl-L-Ala-gamma-D-Glu-L-Lys-D-Ala-D-Ala)](n)-di-trans,octa-cis-undecaprenyl diphosphate + beta-D-GlcNAc-(1-&gt;4)-Mur2Ac(oyl-L-Ala-gamma-D-Glu-L-Lys-D-Ala-D-Ala)-di-trans,octa-cis-undecaprenyl diphosphate = [GlcNAc-(1-&gt;4)-Mur2Ac(oyl-L-Ala-gamma-D-Glu-L-Lys-D-Ala-D-Ala)](n+1)-di-trans,octa-cis-undecaprenyl diphosphate + di-trans,octa-cis-undecaprenyl diphosphate + H(+). It functions in the pathway cell wall biogenesis; peptidoglycan biosynthesis. Functionally, peptidoglycan polymerase that catalyzes glycan chain elongation from lipid-linked precursors. The sequence is that of Biosynthetic peptidoglycan transglycosylase from Salmonella typhi.